Here is a 553-residue protein sequence, read N- to C-terminus: Phosphoglucomutase (553 aa).

The disordered stretch occupies residues 1-24 (MQATVKRYPTTPISGQTMGTSGLR). Polar residues predominate over residues 11–20 (TPISGQTMGT). Substrate is bound by residues Thr-20, Arg-24, 117 to 118 (SH), and Lys-131. The active-site Phosphoserine intermediate is the Ser-117. Ser-117 serves as a coordination point for Mg(2+). 3 residues coordinate Mg(2+): Asp-289, Asp-291, and Asp-293. Residues 293 to 294 (DR), Thr-352, 371 to 373 (EES), Lys-384, and Arg-509 each bind substrate.

It belongs to the phosphohexose mutase family. The cofactor is Mg(2+).

The protein resides in the cytoplasm. It catalyses the reaction alpha-D-glucose 1-phosphate = alpha-D-glucose 6-phosphate. Its function is as follows. This enzyme participates in both the breakdown and synthesis of glucose. The sequence is that of Phosphoglucomutase (pgm) from Entamoeba dispar.